Here is a 263-residue protein sequence, read N- to C-terminus: 3-methyl-2-oxobutanoate hydroxymethyltransferase (263 aa).

2 residues coordinate Mg(2+): D45 and D84. 3-methyl-2-oxobutanoate contacts are provided by residues D45–S46, D84, and K112. E114 contributes to the Mg(2+) binding site. Residue E180 is the Proton acceptor of the active site.

The protein belongs to the PanB family. As to quaternary structure, homodecamer; pentamer of dimers. Mg(2+) serves as cofactor.

The protein localises to the cytoplasm. The catalysed reaction is 3-methyl-2-oxobutanoate + (6R)-5,10-methylene-5,6,7,8-tetrahydrofolate + H2O = 2-dehydropantoate + (6S)-5,6,7,8-tetrahydrofolate. The protein operates within cofactor biosynthesis; (R)-pantothenate biosynthesis; (R)-pantoate from 3-methyl-2-oxobutanoate: step 1/2. Its function is as follows. Catalyzes the reversible reaction in which hydroxymethyl group from 5,10-methylenetetrahydrofolate is transferred onto alpha-ketoisovalerate to form ketopantoate. This Salmonella paratyphi C (strain RKS4594) protein is 3-methyl-2-oxobutanoate hydroxymethyltransferase.